We begin with the raw amino-acid sequence, 989 residues long: MKVVNLKQAILQAWKERWSDYQWAINMKKFFPKGATWDILNLADALLEQAMIGPSPNPLILSYLKYAISSQMVSYSSVLTAISKFDDFSRDLCVQALLDIMDMFCDRLSCHGKAEECIGLCRALLSALHWLLRCTAASAERLREGLEAGTPAAGEKQLAMCLQRLEKTLSSTKNRALLHIAKLEEASSWTAIEHSLLKLGEILANLSNPQLRSQAEQCGTLIRSIPTMLSVHAEQMHKTGFPTVHAVILLEGTMNLTGETQSLVEQLTMVKRMQHIPTPLFVLEIWKACFVGLIESPEGTEELKWTAFTFLKIPQVLVKLKKYSHGDKDFTEDVNCAFEFLLKLTPLLDKADQRCNCDCTNFLLQECGKQGLLSEASVNNLMAKRKADREHAPQQKSGENANIQPNIQLILRAEPTVTNILKTMDADHSKSPEGLLGVLGHMLSGKSLDLLLAAAAATGKLKSFARKFINLNEFTTYGSEESTKPASVRALLFDISFLMLCHVAQTYGSEVILSESRTGAEVPFFETWMQTCMPEEGKILNPDHPCFRPDSTKVESLVALLNNSSEMKLVQMKWHEACLSISAAILEILNAWENGVLAFESIQKITDNIKGKVCSLAVCAVAWLVAHVRMLGLDEREKSLQMIRQLAGPLFSENTLQFYNERVVIMNSILERMCADVLQQTATQIKFPSTGVDTMPYWNLLPPKRPIKEVLTDIFAKVLEKGWVDSRSIHIFDTLLHMGGVYWFCNNLIKELLKETRKEHTLRAVELLYSIFCLDMQQVTLVLLGHILPGLLTDSSKWHSLMDPPGTALAKLAVWCALSSYSSHKGQASTRQKKRHREDIEDYISLFPLDDVQPSKLMRLLSSNEDDANILSSPTDRSMSSSLSASQLHTVNMRDPLNRVLANLFLLISSILGSRTAGPHTQFVQWFMEECVDCLEQGGRGSVLQFMPFTTVSELVKVSAMSSPKVVLAITDLSLPLGRQVAAKAIAAL.

Short sequence motifs (LXXLL motif) lie at residues 128-132 (LHWLL), 344-348 (LTPLL), 448-452 (LDLLL), 557-561 (LVALL), 788-792 (LPGLL), and 857-861 (LMRLL). Residues Ser862 and Ser873 each carry the phosphoserine modification.

This sequence belongs to the Mediator complex subunit 24 family. As to quaternary structure, component of the Mediator complex, which is composed of MED1, MED4, MED6, MED7, MED8, MED9, MED10, MED11, MED12, MED13, MED13L, MED14, MED15, MED16, MED17, MED18, MED19, MED20, MED21, MED22, MED23, MED24, MED25, MED26, MED27, MED29, MED30, MED31, CCNC, CDK8 and CDC2L6/CDK11. The MED12, MED13, CCNC and CDK8 subunits form a distinct module termed the CDK8 module. Mediator containing the CDK8 module is less active than Mediator lacking this module in supporting transcriptional activation. Individual preparations of the Mediator complex lacking one or more distinct subunits have been variously termed ARC, CRSP, DRIP, PC2, SMCC and TRAP. Interacts with AR. In terms of tissue distribution, ubiquitous. Abundant in skeletal muscle, heart and placenta.

It localises to the nucleus. In terms of biological role, component of the Mediator complex, a coactivator involved in the regulated transcription of nearly all RNA polymerase II-dependent genes. Mediator functions as a bridge to convey information from gene-specific regulatory proteins to the basal RNA polymerase II transcription machinery. Mediator is recruited to promoters by direct interactions with regulatory proteins and serves as a scaffold for the assembly of a functional preinitiation complex with RNA polymerase II and the general transcription factors. In Homo sapiens (Human), this protein is Mediator of RNA polymerase II transcription subunit 24 (MED24).